Here is a 2971-residue protein sequence, read N- to C-terminus: uncharacterized protein (2971 aa).

Residues Ser929–Lys964 are disordered. The segment covering Pro936–Leu945 has biased composition (polar residues). Over residues His946 to Lys955 the composition is skewed to basic residues.

It localises to the plastid. The protein localises to the chloroplast. This is an uncharacterized protein from Chlamydomonas reinhardtii (Chlamydomonas smithii).